The primary structure comprises 130 residues: MARRHCFSYWLLVCWLVVTVAEGQEEVFTPPGDSQNNADATDCQIFTLTPPPAPRSPVTRAQPITKTPRCPFHFFPRRPRIHFRFPNRPFVPSRCNHRFPFQPFYWPHRYLTYRYFPRRRLQRGSSSEES.

The N-terminal stretch at 1 to 23 (MARRHCFSYWLLVCWLVVTVAEG) is a signal peptide.

Highly expressed in placenta.

Its subcellular location is the secreted. Its function is as follows. May promote nucleation of hydroxyapatite. The polypeptide is Odontogenesis associated phosphoprotein (Homo sapiens (Human)).